Here is a 184-residue protein sequence, read N- to C-terminus: GTP cyclohydrolase 1 (184 aa).

Zn(2+) is bound by residues cysteine 75, histidine 78, and cysteine 146.

This sequence belongs to the GTP cyclohydrolase I family. As to quaternary structure, homomer.

The catalysed reaction is GTP + H2O = 7,8-dihydroneopterin 3'-triphosphate + formate + H(+). It participates in cofactor biosynthesis; 7,8-dihydroneopterin triphosphate biosynthesis; 7,8-dihydroneopterin triphosphate from GTP: step 1/1. The polypeptide is GTP cyclohydrolase 1 (Streptococcus pneumoniae serotype 19F (strain G54)).